We begin with the raw amino-acid sequence, 486 residues long: Catalase (486 aa).

A disordered region spans residues 1-28; that stretch reads MENKKLTAANGRPIADNQNSQTAGPRGP. Catalysis depends on residues His54 and Asn127. Tyr337 lines the heme pocket.

The protein belongs to the catalase family. Homodimer. It depends on heme as a cofactor.

It catalyses the reaction 2 H2O2 = O2 + 2 H2O. Its function is as follows. Decomposes hydrogen peroxide into water and oxygen; serves to protect cells from the toxic effects of hydrogen peroxide. May be involved in aerotolerance of B.fragilis. This is Catalase (katA) from Bacteroides fragilis (strain YCH46).